A 65-amino-acid polypeptide reads, in one-letter code: Toxin AaHIT4 (65 aa).

Residues 1 to 64 (EHGYLLNKYT…LWNYKTNKCD (64 aa)) form the LCN-type CS-alpha/beta domain. Intrachain disulfides connect C12–C63, C16–C38, C23–C45, and C27–C47.

Belongs to the long (4 C-C) scorpion toxin superfamily. Sodium channel inhibitor family. In terms of tissue distribution, expressed by the venom gland.

The protein resides in the secreted. Its function is as follows. Has a toxic effect on insects and mammals and is capable of competing with anti-insect scorpion toxins for binding to the sodium channel (Nav) of insects. It also modulates the binding of alpha-type and beta-type anti-mammal scorpion toxins to the mammal sodium channel. It may act on both site 3 and site 4 of voltage-gated sodium channels. This chain is Toxin AaHIT4, found in Androctonus australis (Sahara scorpion).